We begin with the raw amino-acid sequence, 315 residues long: tRNA wybutosine-synthesizing protein 5 (315 aa).

Residues 102-267 (DEKYYLRSLG…YDTTDTYGNK (166 aa)) enclose the JmjC domain. Residue tyrosine 106 participates in 2-oxoglutarate binding. The Fe cation site is built by histidine 160 and aspartate 162. 2 residues coordinate 2-oxoglutarate: asparagine 166 and lysine 175. Position 235 (histidine 235) interacts with Fe cation.

Belongs to the TYW5 family. As to quaternary structure, homodimer. Fe(2+) is required as a cofactor.

It carries out the reaction 7-[(3S)-3-amino-3-carboxypropyl]wyosine(37) in tRNA(Phe) + 2-oxoglutarate + O2 = 7-(2-hydroxy-3-amino-3-carboxypropyl)wyosine(37) in tRNA(Phe) + succinate + CO2. It participates in tRNA modification; wybutosine-tRNA(Phe) biosynthesis. In terms of biological role, tRNA hydroxylase that acts as a component of the wybutosine biosynthesis pathway. Wybutosine is a hyper modified guanosine with a tricyclic base found at the 3'-position adjacent to the anticodon of eukaryotic phenylalanine tRNA. Catalyzes the hydroxylation of 7-(a-amino-a-carboxypropyl)wyosine (yW-72) into undermodified hydroxywybutosine (OHyW*). OHyW* being further transformed into hydroxywybutosine (OHyW) by LCMT2/TYW4. OHyW is a derivative of wybutosine found in higher eukaryotes. This Mus musculus (Mouse) protein is tRNA wybutosine-synthesizing protein 5 (Tyw5).